We begin with the raw amino-acid sequence, 192 residues long: Zinc finger CCHC domain-containing protein 10 (192 aa).

The CCHC-type zinc finger occupies 43–60 (VRCQKCLEFGHWTYECTG). The segment at 89 to 192 (QSIGETNVER…DEPPKKKKKK (104 aa)) is disordered. 2 stretches are compositionally biased toward low complexity: residues 109–136 (TSSS…SSSS) and 144–179 (SSSS…STDS).

The chain is Zinc finger CCHC domain-containing protein 10 (ZCCHC10) from Homo sapiens (Human).